The sequence spans 520 residues: ATP-dependent clpX-like chaperone, mitochondrial (520 aa).

A mitochondrion-targeting transit peptide spans 1-13 (MLKSASQNFFRAY). 140-147 (GPSGSGKT) contacts ATP.

This sequence belongs to the ClpX chaperone family. Homohexamer that forms a ring structure; this hexamerization requires ATP binding. Interacts with HEM1.

It localises to the mitochondrion inner membrane. Its function is as follows. ATP-dependent unfoldase that stimulates the incorporation of the pyridoxal phosphate cofactor into 5-aminolevulinate synthase (HEM1), thereby activating 5-aminolevulinate (ALA) synthesis, the first step in heme biosynthesis. Up-regulates heme biosynthesis. This Saccharomyces cerevisiae (strain ATCC 204508 / S288c) (Baker's yeast) protein is ATP-dependent clpX-like chaperone, mitochondrial.